We begin with the raw amino-acid sequence, 106 residues long: uncharacterized protein (106 aa).

It belongs to the HesB/IscA family.

This is an uncharacterized protein from Cereibacter sphaeroides (Rhodobacter sphaeroides).